The chain runs to 157 residues: DNA gyrase inhibitor (157 aa).

The protein belongs to the DNA gyrase inhibitor family. In terms of assembly, interacts with DNA gyrase.

It is found in the cytoplasm. In terms of biological role, inhibits the supercoiling activity of DNA gyrase. Acts by inhibiting DNA gyrase at an early step, prior to (or at the step of) binding of DNA by the gyrase. It protects cells against toxins that target DNA gyrase, by inhibiting activity of these toxins and reducing the formation of lethal double-strand breaks in the cell. The chain is DNA gyrase inhibitor from Yersinia enterocolitica serotype O:8 / biotype 1B (strain NCTC 13174 / 8081).